A 305-amino-acid chain; its full sequence is UDP-3-O-acyl-N-acetylglucosamine deacetylase (305 aa).

Zn(2+) contacts are provided by His79, His238, and Asp242. His265 functions as the Proton donor in the catalytic mechanism.

The protein belongs to the LpxC family. Requires Zn(2+) as cofactor.

It catalyses the reaction a UDP-3-O-[(3R)-3-hydroxyacyl]-N-acetyl-alpha-D-glucosamine + H2O = a UDP-3-O-[(3R)-3-hydroxyacyl]-alpha-D-glucosamine + acetate. It functions in the pathway glycolipid biosynthesis; lipid IV(A) biosynthesis; lipid IV(A) from (3R)-3-hydroxytetradecanoyl-[acyl-carrier-protein] and UDP-N-acetyl-alpha-D-glucosamine: step 2/6. Its function is as follows. Catalyzes the hydrolysis of UDP-3-O-myristoyl-N-acetylglucosamine to form UDP-3-O-myristoylglucosamine and acetate, the committed step in lipid A biosynthesis. This Vibrio atlanticus (strain LGP32) (Vibrio splendidus (strain Mel32)) protein is UDP-3-O-acyl-N-acetylglucosamine deacetylase.